The sequence spans 475 residues: Tetratricopeptide repeat protein 29 (475 aa).

TPR repeat units lie at residues 92–131 (DALREAARVRSLFWLQKPLEEQPDKLDYLYHYLTRAEDAE), 136–173 (FEDVHNNLYALACYFNNSEDKWVRNHFYERCFKIAQLI), 182–215 (AEAHMHMGLLYEEDGQLLEAAEHYEAFHQLTQGR), 234–267 (LRTYRLLSDKMLENKEYKQAIKILIKASEIAKEG), 274–307 (AEASYYLGLAHLAAEEYETALTVLDTYCKISTDL), 314–347 (GRGYEAIAKVLQSQGEMTEAIKYLKKFVKIARNN), and 354–387 (VRASTMLGDIYNEKGYYNKASECFQQAFDTTVEL). Positions 437-475 (IEPDPVTEEFRGSTVEAVSQNSERLEELSRFPGDQKNET) are disordered. Positions 459–475 (ERLEELSRFPGDQKNET) are enriched in basic and acidic residues.

In terms of tissue distribution, expressed in spermatozoa (at protein level).

Its subcellular location is the cytoplasm. It localises to the cytoskeleton. It is found in the flagellum axoneme. In terms of biological role, axonemal protein which is implicated in axonemal and/or peri-axonemal structure assembly and regulates flagellum assembly and beating and therefore sperm motility. The polypeptide is Tetratricopeptide repeat protein 29 (TTC29) (Homo sapiens (Human)).